The chain runs to 710 residues: Polyribonucleotide nucleotidyltransferase (710 aa).

Residues D489 and D495 each coordinate Mg(2+). In terms of domain architecture, KH spans 556–615; that stretch reads PKIDTIKIDVDKIKVVIGKGGETIDKIIAETGVKIDIDDEGNVSIYSSDQAAIDRTKEII. The 69-residue stretch at 625–693 folds into the S1 motif domain; sequence GEVYHAKVIR…EKGRVDASMK (69 aa). The tract at residues 691-710 is disordered; sequence SMKALIPRPPKPEKKEEKHD. Residues 700-710 show a composition bias toward basic and acidic residues; that stretch reads PKPEKKEEKHD.

Belongs to the polyribonucleotide nucleotidyltransferase family. Mg(2+) is required as a cofactor.

Its subcellular location is the cytoplasm. It carries out the reaction RNA(n+1) + phosphate = RNA(n) + a ribonucleoside 5'-diphosphate. Its function is as follows. Involved in mRNA degradation. Catalyzes the phosphorolysis of single-stranded polyribonucleotides processively in the 3'- to 5'-direction. This is Polyribonucleotide nucleotidyltransferase from Streptococcus pyogenes serotype M18 (strain MGAS8232).